An 811-amino-acid chain; its full sequence is MNSMSSGHLLSRSLLKLPMSVLVKGTAIPSNPIQDLDIDTHKPVIYALPFRSNVDLLTLQTHAKEAGLPDPLEPLMLNGKAFQRYVFIASRPTLLSSDQHVPSDSIALFSELLTEHKLDSELDVQVIPATVLWGRKPGKEGQERPYLQALNGPEKALAVLASGRDCLVRFSPVVSMRYMADTHGTDASIAHKLARVARIHFSRQKLAASGPNLPQRAQLFARLMNSPAIEKAIADEAKSKQIPLEKARKEAHDILDEIAADFSYSLVKKGDRILGWLWNRIYQGLNINNAATVRRLAQDGHEIVYVPCHRSHMDYLLLSYVLYHEGMVPPHIAAGINLNFFPAGPIFRRGGAFFIRRSFKGAPLYSTIFREYLAELFAKGYSVEYFSEGGRSRTGRLLPAKTGMLAMTIQAMLRGLNRPVTLVPVYIGYEHVMEVGTYAKELRGKRKEKENAGLVLRTLRKLRNFGQGYVNFGEPIPLNQFLNETVPQWTQDIDPMGESKPQWMTPTVNKLANRMMTHINDAAAVNAMTLCATALLASRQRALARDNLIKQVDCYLSLLRNVPYSATSTLPSESAEKLVEHAESLDKFVVETDTMGDIISLDRNQSILMTYYRNNIIHLLALPSLIAQLLIRQQSVSLEKVQATVAQIYPFLKQELFLRFEAEELNDLVLRYVAELARQGLVTVEGKTVTLNQAQTQVLMLLGRIISETLQRYAIALNLLVSCPHLGKAELEEKSQEVAQRLGRLHGINAPEFFDKGVFASLFVTLQEQGYLDDQGRCVLETAKPLSRQLYALIYPEVRMTIQESLCQVDA.

Positions 309-314 (HRSHMD) match the HXXXXD motif motif.

This sequence belongs to the GPAT/DAPAT family.

Its subcellular location is the cell inner membrane. It catalyses the reaction sn-glycerol 3-phosphate + an acyl-CoA = a 1-acyl-sn-glycero-3-phosphate + CoA. It functions in the pathway phospholipid metabolism; CDP-diacylglycerol biosynthesis; CDP-diacylglycerol from sn-glycerol 3-phosphate: step 1/3. The chain is Glycerol-3-phosphate acyltransferase (plsB) from Vibrio cholerae serotype O1 (strain ATCC 39315 / El Tor Inaba N16961).